Reading from the N-terminus, the 197-residue chain is Recombination protein RecR (197 aa).

The C4-type zinc-finger motif lies at 56–71 (CSRCFNLSAEDPCDIC). A Toprim domain is found at 79 to 174 (ETICVVAEPR…RVTRIAFGLP (96 aa)).

Belongs to the RecR family.

Functionally, may play a role in DNA repair. It seems to be involved in an RecBC-independent recombinational process of DNA repair. It may act with RecF and RecO. The polypeptide is Recombination protein RecR (Gloeobacter violaceus (strain ATCC 29082 / PCC 7421)).